Reading from the N-terminus, the 93-residue chain is uncharacterized protein (93 aa).

Positions 35 to 72 (KSVPPPTPPKPVKKTPSPTLPKPSKQKQEPQVEVNEDR) are disordered. A compositionally biased stretch (basic and acidic residues) spans 60–72 (QKQEPQVEVNEDR).

This is an uncharacterized protein from Ostreid herpesvirus 1 (isolate France) (OsHV-1).